The following is a 361-amino-acid chain: Chorismate synthase (361 aa).

Residues 40 to 49 (DLQHDLDRRR) are compositionally biased toward basic and acidic residues. Residues 40–60 (DLQHDLDRRRPGTSRHTTQRR) form a disordered region. 2 residues coordinate NADP(+): R48 and R54. FMN-binding positions include 125–127 (RSS), 237–238 (NA), G277, 292–296 (KPTSS), and R318.

The protein belongs to the chorismate synthase family. As to quaternary structure, homotetramer. FMNH2 serves as cofactor.

The enzyme catalyses 5-O-(1-carboxyvinyl)-3-phosphoshikimate = chorismate + phosphate. Its pathway is metabolic intermediate biosynthesis; chorismate biosynthesis; chorismate from D-erythrose 4-phosphate and phosphoenolpyruvate: step 7/7. Functionally, catalyzes the anti-1,4-elimination of the C-3 phosphate and the C-6 proR hydrogen from 5-enolpyruvylshikimate-3-phosphate (EPSP) to yield chorismate, which is the branch point compound that serves as the starting substrate for the three terminal pathways of aromatic amino acid biosynthesis. This reaction introduces a second double bond into the aromatic ring system. This Chromohalobacter salexigens (strain ATCC BAA-138 / DSM 3043 / CIP 106854 / NCIMB 13768 / 1H11) protein is Chorismate synthase.